We begin with the raw amino-acid sequence, 320 residues long: Cytochrome c biogenesis protein CcsA (320 aa).

The next 8 membrane-spanning stretches (helical) occupy residues 14–34 (SFFL…YINI), 37–57 (ITIL…TFLL), 68–88 (LSNL…IHLI), 97–117 (WLGI…TLSL), 143–163 (MMLS…ILII), 228–248 (VISL…VWAN), 263–283 (WALI…IKGW), and 289–309 (AIIA…VNLL).

It belongs to the CcmF/CycK/Ccl1/NrfE/CcsA family. As to quaternary structure, may interact with Ccs1.

Its subcellular location is the plastid. It is found in the chloroplast thylakoid membrane. Its function is as follows. Required during biogenesis of c-type cytochromes (cytochrome c6 and cytochrome f) at the step of heme attachment. The protein is Cytochrome c biogenesis protein CcsA of Marchantia polymorpha (Common liverwort).